Consider the following 389-residue polypeptide: MWRVGHLLLLMSIVFRITEEKSLGDAGSLEDSMFIQEQKLVEDDDLNKVESFLGFMKEDFLRKLNLSGVPQEHRKVQPPQFMIELYNRYASDKNSIPRSDVIRSFVVQDVIYSIRQGNKTQHRLLFNVSIPNHEEITSVQLRLFTLWHRHKPACDDLFTSINVYDVEYEQNAKILHLLDGRDVRESINTWEAFDVTGAVRIWHESRRGAGEIQVEVQHSCDSFDISLSLEDNSSAVVIVFSDDLGNRKEESMRKVKEMLVREQQQVGNQAPVSNRHRRRKRKAKNNYCRRTSLKVNFKDIGWDKWIVAPPEYDAYECKGVCYFPLTDDVSPSRHAVIQTLVNLSNPKKANMACCVPTKLDPIAVMYQEKGVITVRHLYEEMKVAKCGCR.

An N-terminal signal peptide occupies residues 1–20 (MWRVGHLLLLMSIVFRITEE). The propeptide occupies 21–280 (KSLGDAGSLE…PVSNRHRRRK (260 aa)). Asn65, Asn118, Asn127, and Asn232 each carry an N-linked (GlcNAc...) asparagine glycan. Over residues 263–272 (QQQVGNQAPV) the composition is skewed to polar residues. The segment at 263 to 284 (QQQVGNQAPVSNRHRRRKRKAK) is disordered. Basic residues predominate over residues 274–284 (NRHRRRKRKAK). Intrachain disulfides connect Cys288–Cys354, Cys317–Cys386, and Cys321–Cys388. Asn342 carries N-linked (GlcNAc...) asparagine glycosylation.

Belongs to the TGF-beta family. In terms of assembly, homodimer; disulfide-linked. Post-translationally, a reversible disulfide bond can be formed between the two subunits in the homodimer; this has no effect on gdf2 activity.

Its subcellular location is the secreted. Functionally, potent circulating inhibitor of angiogenesis. Signals through the type I activin receptor ACVRL1 but not other Alks. Signaling through SMAD1 in endothelial cells requires TGF-beta coreceptor endoglin/eng. The protein is Growth/differentiation factor 2 (gdf2) of Danio rerio (Zebrafish).